A 117-amino-acid chain; its full sequence is Ig heavy chain V region G4 (117 aa).

The signal sequence occupies residues 1–19 (MTHWLCFTLALVAVRGVLS). The tract at residues 20–49 (EIQLVESGGAIRKPGDSLRLSCKASGFTFS) is framework-1. Cysteine 41 and cysteine 115 are oxidised to a cystine. The tract at residues 50–54 (DTWMA) is complementarity-determining-1. The tract at residues 55-68 (WARQPPGKGLQWVG) is framework-2. The interval 69 to 85 (EINGNSETIRYAPEVKG) is complementarity-determining-2. The segment at 86-117 (RLTISRDNTQNLLFLQISSLKPEDTATYYCAR) is framework-3.

This is Ig heavy chain V region G4 (G4) from Caiman crocodilus (Spectacled caiman).